The following is a 382-amino-acid chain: Protein-arginine rhamnosyltransferase (382 aa).

Residues 17 to 20 (NFGD), Tyr187, Gln252, and 268 to 272 (RGEDS) contribute to the dTDP-beta-L-rhamnose site. Catalysis depends on Asp20, which acts as the Proton acceptor. Glu270 is an active-site residue.

Belongs to the glycosyltransferase 104 family.

It catalyses the reaction dTDP-beta-L-rhamnose + L-arginyl-[protein] = N(omega)-(alpha-L-rhamnosyl)-L-arginyl-[protein] + dTDP + H(+). Its function is as follows. Protein-arginine rhamnosyltransferase that catalyzes the transfer of a single rhamnose to elongation factor P (EF-P) on 'Lys-32', a modification required for EF-P-dependent rescue of polyproline stalled ribosomes. The sequence is that of Protein-arginine rhamnosyltransferase from Neisseria meningitidis.